Reading from the N-terminus, the 426-residue chain is Glutamate-1-semialdehyde 2,1-aminomutase (426 aa).

At Lys-265 the chain carries N6-(pyridoxal phosphate)lysine.

Belongs to the class-III pyridoxal-phosphate-dependent aminotransferase family. HemL subfamily. Homodimer. It depends on pyridoxal 5'-phosphate as a cofactor.

The protein resides in the cytoplasm. The catalysed reaction is (S)-4-amino-5-oxopentanoate = 5-aminolevulinate. Its pathway is porphyrin-containing compound metabolism; protoporphyrin-IX biosynthesis; 5-aminolevulinate from L-glutamyl-tRNA(Glu): step 2/2. This chain is Glutamate-1-semialdehyde 2,1-aminomutase, found in Shigella flexneri serotype 5b (strain 8401).